Here is a 313-residue protein sequence, read N- to C-terminus: Small ribosomal subunit biogenesis GTPase RsgA (313 aa).

The CP-type G domain occupies 80–237; it reads KVALRQVIVS…LIDTPGIKEF (158 aa). GTP-binding positions include 129-132 and 180-188; these read NKVD and GQSGVGKSS. 4 residues coordinate Zn(2+): Cys-261, Cys-266, His-268, and Cys-274.

Belongs to the TRAFAC class YlqF/YawG GTPase family. RsgA subfamily. In terms of assembly, monomer. Associates with 30S ribosomal subunit, binds 16S rRNA. Requires Zn(2+) as cofactor.

It is found in the cytoplasm. Its function is as follows. One of several proteins that assist in the late maturation steps of the functional core of the 30S ribosomal subunit. Helps release RbfA from mature subunits. May play a role in the assembly of ribosomal proteins into the subunit. Circularly permuted GTPase that catalyzes slow GTP hydrolysis, GTPase activity is stimulated by the 30S ribosomal subunit. This chain is Small ribosomal subunit biogenesis GTPase RsgA, found in Borrelia recurrentis (strain A1).